Here is a 301-residue protein sequence, read N- to C-terminus: Lycopene elongase/hydratase (301 aa).

Residues 1-20 form a disordered region; it reads MSADMAAQSESGEGGDDGRA. The next 9 helical transmembrane spans lie at 39 to 59, 61 to 81, 110 to 130, 133 to 153, 160 to 180, 186 to 206, 229 to 249, 252 to 272, and 276 to 296; these read FWLY…SALA, LFGL…NVFL, PVNT…FAVA, VAWP…APPF, LLDS…YAAV, PMLA…FSAI, TYWY…AVDL, GALL…GVDV, and YWWY…GALW.

It belongs to the UbiA prenyltransferase family.

The protein resides in the cell membrane. The catalysed reaction is all-trans-lycopene + dimethylallyl diphosphate + H2O = dihydroisopentenyldehydrorhodopin + diphosphate. The enzyme catalyses isopentenyldehydrorhodopin + dimethylallyl diphosphate + H2O = dihydrobisanhydrobacterioruberin + diphosphate. It functions in the pathway carotenoid biosynthesis. Functionally, involved in the biosynthesis of the acyclic C50 carotenoid bacterioruberin (BR). Acts as a bifunctional elongase/hydratase that catalyzes the elongation of lycopene by attaching a C(5) isoprene unit at C-2, as well as the hydroxylation of the previous end of the molecule. The enzyme acts at both ends of the substrate, and catalyzes the conversion of lycopene to the C(45) intermediate dihydroisopentenyldehydrorhodopin (DH-IDR) and the conversion of isopentenyldehydrorhodopin (IDR) to the C(50) carotenoid dihydrobisanhydrobacterioruberin (DH-BABR). Can also catalyze the conversion of lycopene to tetrahydrobisanhydrobacterioruberin (TH-BABR). This is Lycopene elongase/hydratase from Haloferax volcanii (strain ATCC 29605 / DSM 3757 / JCM 8879 / NBRC 14742 / NCIMB 2012 / VKM B-1768 / DS2) (Halobacterium volcanii).